Reading from the N-terminus, the 502-residue chain is Keratin-associated protein 16-1 (502 aa).

Repeat copies occupy residues 4-8 (CCCSR), 58-62 (CCQPS), 73-77 (CCEAT), 93-97 (CCEAT), 108-112 (CCQPV), 113-117 (CCEAT), 133-137 (CCEAT), 152-156 (CCETS), 177-181 (CCQPV), 187-191 (CCSAV), 212-216 (CCQPV), 222-226 (CCPSV), 272-276 (CCVQG), 292-296 (CCVSS), and 347-351 (CCRPG). Positions 73–307 (CCEATICEPS…CQPVCPEPSP (235 aa)) are 15 X 5 AA repeats of C-C-X(3). A disordered region spans residues 435–502 (RQPCTDSDND…QPAASKPADR (68 aa)). A compositionally biased stretch (low complexity) spans 489–502 (AAAPQPAASKPADR).

This sequence belongs to the KRTAP type 16 family. In terms of assembly, interacts with hair keratins.

In the hair cortex, hair keratin intermediate filaments are embedded in an interfilamentous matrix, consisting of hair keratin-associated proteins (KRTAP), which are essential for the formation of a rigid and resistant hair shaft through their extensive disulfide bond cross-linking with abundant cysteine residues of hair keratins. The matrix proteins include the high-sulfur and high-glycine-tyrosine keratins. This is Keratin-associated protein 16-1 (Krtap16-1) from Mus musculus (Mouse).